The chain runs to 340 residues: Probable sugar phosphate/phosphate translocator At3g14410 (340 aa).

The next 10 membrane-spanning stretches (helical) occupy residues 12-32 (EFVT…QIFF), 44-64 (FPYP…LCFL), 80-100 (LEIY…TLWL), 110-130 (VAFA…LGVA), 141-161 (LLIM…ELNI), 163-183 (WIGV…LIFM), 197-217 (ISLM…PWIF), 234-254 (VVLT…FLVI), 260-282 (LTIR…LLFA), and 286-305 (LTII…AAYN). The segment at 320-340 (ETPGDAESIPLVSQGNTNTER) is disordered. Polar residues predominate over residues 330–340 (LVSQGNTNTER).

It belongs to the TPT transporter family. TPT (TC 2.A.7.9) subfamily.

The protein localises to the membrane. The polypeptide is Probable sugar phosphate/phosphate translocator At3g14410 (Arabidopsis thaliana (Mouse-ear cress)).